Here is a 729-residue protein sequence, read N- to C-terminus: Fatty acid oxidation complex subunit alpha (729 aa).

The segment at 1-189 is enoyl-CoA hydratase/isomerase; it reads MLYKGDTLYL…KIGLVDGVVK (189 aa). Asp296 contacts substrate. Residues 311-729 form a 3-hydroxyacyl-CoA dehydrogenase region; sequence ETPKQAAVLG…ARPVGSLKTA (419 aa). NAD(+)-binding positions include Met324, Asp343, 400 to 402, Lys407, and Ser429; that span reads VVE. The For 3-hydroxyacyl-CoA dehydrogenase activity role is filled by His450. Asn453 provides a ligand contact to NAD(+). Substrate-binding residues include Asn500 and Tyr660. The disordered stretch occupies residues 708-729; the sequence is RHNEPYYPPVEPARPVGSLKTA.

The protein in the N-terminal section; belongs to the enoyl-CoA hydratase/isomerase family. This sequence in the C-terminal section; belongs to the 3-hydroxyacyl-CoA dehydrogenase family. In terms of assembly, heterotetramer of two alpha chains (FadB) and two beta chains (FadA).

It carries out the reaction a (3S)-3-hydroxyacyl-CoA + NAD(+) = a 3-oxoacyl-CoA + NADH + H(+). The enzyme catalyses a (3S)-3-hydroxyacyl-CoA = a (2E)-enoyl-CoA + H2O. It catalyses the reaction a 4-saturated-(3S)-3-hydroxyacyl-CoA = a (3E)-enoyl-CoA + H2O. The catalysed reaction is (3S)-3-hydroxybutanoyl-CoA = (3R)-3-hydroxybutanoyl-CoA. It carries out the reaction a (3Z)-enoyl-CoA = a 4-saturated (2E)-enoyl-CoA. The enzyme catalyses a (3E)-enoyl-CoA = a 4-saturated (2E)-enoyl-CoA. It participates in lipid metabolism; fatty acid beta-oxidation. Functionally, involved in the aerobic and anaerobic degradation of long-chain fatty acids via beta-oxidation cycle. Catalyzes the formation of 3-oxoacyl-CoA from enoyl-CoA via L-3-hydroxyacyl-CoA. It can also use D-3-hydroxyacyl-CoA and cis-3-enoyl-CoA as substrate. This is Fatty acid oxidation complex subunit alpha from Salmonella agona (strain SL483).